The sequence spans 367 residues: uncharacterized protein (367 aa).

This is an uncharacterized protein from Buchnera aphidicola subsp. Acyrthosiphon pisum (strain APS) (Acyrthosiphon pisum symbiotic bacterium).